Reading from the N-terminus, the 1209-residue chain is DNA-directed RNA polymerase subunit beta' (1209 aa).

Zn(2+)-binding residues include Cys-60, Cys-62, Cys-75, and Cys-78. Mg(2+) contacts are provided by Asp-450, Asp-452, and Asp-454. Zn(2+)-binding residues include Cys-819, Cys-893, Cys-900, and Cys-903.

It belongs to the RNA polymerase beta' chain family. As to quaternary structure, the RNAP catalytic core consists of 2 alpha, 1 beta, 1 beta' and 1 omega subunit. When a sigma factor is associated with the core the holoenzyme is formed, which can initiate transcription. Mg(2+) is required as a cofactor. It depends on Zn(2+) as a cofactor.

It catalyses the reaction RNA(n) + a ribonucleoside 5'-triphosphate = RNA(n+1) + diphosphate. In terms of biological role, DNA-dependent RNA polymerase catalyzes the transcription of DNA into RNA using the four ribonucleoside triphosphates as substrates. This is DNA-directed RNA polymerase subunit beta' from Streptococcus mutans serotype c (strain ATCC 700610 / UA159).